Reading from the N-terminus, the 129-residue chain is Ig kappa chain V-IV region S107B (129 aa).

The signal sequence occupies residues 1-22 (MDLQVQIIXFLLISVTVIMSRG). The tract at residues 23 to 45 (ENVLTQSPAIMAASLGQKVTMTC) is framework-1. Cysteines 45 and 111 form a disulfide. Residues 46 to 57 (SASSSVSSSYLH) are complementarity-determining-1. A framework-2 region spans residues 58–72 (WYQQKSGASPKPLIH). Residues 73 to 79 (RTSNLAS) form a complementarity-determining-2 region. Positions 80-111 (GVPARFSGSGSGTSYSLTISSVEAEDDATYYC) are framework-3. The tract at residues 112–118 (QQWSGYP) is complementarity-determining-3. Residues 119-128 (FGSGTKLEIK) form a framework-4 region.

This is Ig kappa chain V-IV region S107B from Mus musculus (Mouse).